The sequence spans 229 residues: 5'-methylthioadenosine/S-adenosylhomocysteine nucleosidase (229 aa).

The Proton acceptor role is filled by glutamate 12. Residues glycine 78, isoleucine 152, and 173–174 (ME) contribute to the substrate site. Aspartate 197 serves as the catalytic Proton donor.

This sequence belongs to the PNP/UDP phosphorylase family. MtnN subfamily.

It catalyses the reaction S-adenosyl-L-homocysteine + H2O = S-(5-deoxy-D-ribos-5-yl)-L-homocysteine + adenine. The catalysed reaction is S-methyl-5'-thioadenosine + H2O = 5-(methylsulfanyl)-D-ribose + adenine. It carries out the reaction 5'-deoxyadenosine + H2O = 5-deoxy-D-ribose + adenine. Its pathway is amino-acid biosynthesis; L-methionine biosynthesis via salvage pathway; S-methyl-5-thio-alpha-D-ribose 1-phosphate from S-methyl-5'-thioadenosine (hydrolase route): step 1/2. Catalyzes the irreversible cleavage of the glycosidic bond in both 5'-methylthioadenosine (MTA) and S-adenosylhomocysteine (SAH/AdoHcy) to adenine and the corresponding thioribose, 5'-methylthioribose and S-ribosylhomocysteine, respectively. Also cleaves 5'-deoxyadenosine, a toxic by-product of radical S-adenosylmethionine (SAM) enzymes, into 5-deoxyribose and adenine. The chain is 5'-methylthioadenosine/S-adenosylhomocysteine nucleosidase from Histophilus somni (strain 129Pt) (Haemophilus somnus).